The sequence spans 258 residues: Acetylglutamate kinase (258 aa).

Substrate is bound by residues 41–42 (GG), Arg-63, and Asn-156.

It belongs to the acetylglutamate kinase family. ArgB subfamily.

It localises to the cytoplasm. The enzyme catalyses N-acetyl-L-glutamate + ATP = N-acetyl-L-glutamyl 5-phosphate + ADP. It functions in the pathway amino-acid biosynthesis; L-arginine biosynthesis; N(2)-acetyl-L-ornithine from L-glutamate: step 2/4. Catalyzes the ATP-dependent phosphorylation of N-acetyl-L-glutamate. In Bacillus velezensis (strain DSM 23117 / BGSC 10A6 / LMG 26770 / FZB42) (Bacillus amyloliquefaciens subsp. plantarum), this protein is Acetylglutamate kinase.